Reading from the N-terminus, the 413-residue chain is Protein MANNAN SYNTHESIS-RELATED (413 aa).

At 1 to 5 the chain is on the cytoplasmic side; that stretch reads MNSME. Residues 6 to 26 form a helical; Signal-anchor for type II membrane protein membrane-spanning segment; it reads IRQAFAGLLTLSMFIMLGNMI. Residues 27–413 are Lumenal-facing; the sequence is KKDHFDYPAE…KNHLAYKCFC (387 aa). An N-linked (GlcNAc...) asparagine glycan is attached at Asn207. 255 to 257 provides a ligand contact to substrate; that stretch reads DLR.

This sequence belongs to the glycosyltransferase GT106 family. Highly and specifically expressed in the endosperm.

The protein resides in the golgi apparatus membrane. It functions in the pathway glycan biosynthesis. Glycosyltransferase involved in mannan biosynthesis. The chain is Protein MANNAN SYNTHESIS-RELATED from Trigonella foenum-graecum (Fenugreek).